Reading from the N-terminus, the 302-residue chain is Acetylxylan esterase (302 aa).

An N-terminal signal peptide occupies residues 1-20 (MPSVKETLTLLLSQAFLATG). The propeptide occupies 21–31 (SPVDGETVVKR). A Pyrrolidone carboxylic acid modification is found at Q32. Residue N94 is glycosylated (N-linked (GlcNAc...) asparagine). The active site involves S121. The interval 236–273 (QLSSGGSQPPGGGPTSTSRPTSTRTGSSPGPTQTHWGQ) is disordered. The tract at residues 244–266 (PPGGGPTSTSRPTSTRTGSSPGP) is linker. Residues 250–269 (TSTSRPTSTRTGSSPGPTQT) show a composition bias toward low complexity. One can recognise a CBM1 domain in the interval 266–302 (PTQTHWGQCGGQGWTGPTQCESGTTCQVISQWYSQCL). Disulfide bonds link C274–C291 and C285–C301.

It belongs to the cutinase family. Acetylxylan esterase subfamily. In terms of assembly, monomer. Post-translationally, glycosylated.

The protein resides in the secreted. It catalyses the reaction Deacetylation of xylans and xylo-oligosaccharides.. It participates in glycan degradation; xylan degradation. With respect to regulation, inhibited by phenylmethylsulfonyl flouride. Degrades acetylated xylans by cleaving acetyl side groups from the hetero-xylan backbone. This chain is Acetylxylan esterase (axe1), found in Hypocrea jecorina (Trichoderma reesei).